Consider the following 188-residue polypeptide: Elongation factor P (188 aa).

The protein belongs to the elongation factor P family.

Its subcellular location is the cytoplasm. The protein operates within protein biosynthesis; polypeptide chain elongation. In terms of biological role, involved in peptide bond synthesis. Stimulates efficient translation and peptide-bond synthesis on native or reconstituted 70S ribosomes in vitro. Probably functions indirectly by altering the affinity of the ribosome for aminoacyl-tRNA, thus increasing their reactivity as acceptors for peptidyl transferase. This Natranaerobius thermophilus (strain ATCC BAA-1301 / DSM 18059 / JW/NM-WN-LF) protein is Elongation factor P.